The chain runs to 469 residues: Glutamate--tRNA ligase 1 (469 aa).

Residues 8–18 (PSPTGYLHIGG) carry the 'HIGH' region motif. The interval 117-137 (TPRYDGTWRPEPGKELPPVPA) is disordered. The 'KMSKS' region motif lies at 240–244 (KLSKR). Residue K243 participates in ATP binding.

Belongs to the class-I aminoacyl-tRNA synthetase family. Glutamate--tRNA ligase type 1 subfamily. Monomer.

Its subcellular location is the cytoplasm. The catalysed reaction is tRNA(Glu) + L-glutamate + ATP = L-glutamyl-tRNA(Glu) + AMP + diphosphate. In terms of biological role, catalyzes the attachment of glutamate to tRNA(Glu) in a two-step reaction: glutamate is first activated by ATP to form Glu-AMP and then transferred to the acceptor end of tRNA(Glu). This is Glutamate--tRNA ligase 1 from Aliarcobacter butzleri (strain RM4018) (Arcobacter butzleri).